Here is a 130-residue protein sequence, read N- to C-terminus: YopE regulator (130 aa).

Positive regulator of YopE. The chain is YopE regulator (yerA) from Yersinia enterocolitica serotype O:8 / biotype 1B (strain NCTC 13174 / 8081).